The following is a 332-amino-acid chain: L-lactate dehydrogenase A chain (332 aa).

Residues Gly-29–Lys-57 and Arg-99 contribute to the NAD(+) site. Arg-106, Asn-138, and Arg-169 together coordinate substrate. Asn-138 is a binding site for NAD(+). The Proton acceptor role is filled by His-193. Thr-248 contacts substrate.

It belongs to the LDH/MDH superfamily. LDH family. Homotetramer.

The protein resides in the cytoplasm. It catalyses the reaction (S)-lactate + NAD(+) = pyruvate + NADH + H(+). It functions in the pathway fermentation; pyruvate fermentation to lactate; (S)-lactate from pyruvate: step 1/1. Its function is as follows. Interconverts simultaneously and stereospecifically pyruvate and lactate with concomitant interconversion of NADH and NAD(+). The chain is L-lactate dehydrogenase A chain (ldha) from Sphyraena lucasana (Lucas barracuda).